The primary structure comprises 423 residues: Histidine--tRNA ligase (423 aa).

Belongs to the class-II aminoacyl-tRNA synthetase family. As to quaternary structure, homodimer.

The protein localises to the cytoplasm. The enzyme catalyses tRNA(His) + L-histidine + ATP = L-histidyl-tRNA(His) + AMP + diphosphate + H(+). The sequence is that of Histidine--tRNA ligase from Haemophilus influenzae (strain PittEE).